The primary structure comprises 376 residues: Glucose-1-phosphate adenylyltransferase (376 aa).

Alpha-D-glucose 1-phosphate contacts are provided by residues Tyr-101, Gly-166, 181–182 (EK), and Ser-192.

It belongs to the bacterial/plant glucose-1-phosphate adenylyltransferase family. Homotetramer.

It catalyses the reaction alpha-D-glucose 1-phosphate + ATP + H(+) = ADP-alpha-D-glucose + diphosphate. It participates in glycan biosynthesis; glycogen biosynthesis. Functionally, involved in the biosynthesis of ADP-glucose, a building block required for the elongation reactions to produce glycogen. Catalyzes the reaction between ATP and alpha-D-glucose 1-phosphate (G1P) to produce pyrophosphate and ADP-Glc. This chain is Glucose-1-phosphate adenylyltransferase, found in Bacillus mycoides (strain KBAB4) (Bacillus weihenstephanensis).